The sequence spans 1097 residues: Kinesin-like protein KIF1C (1097 aa).

The region spanning 5 to 347 (SVKVAVRVRP…LRYADRTKQI (343 aa)) is the Kinesin motor domain. 96-103 (GQTGAGKS) contributes to the ATP binding site. At Ser-294 the chain carries Phosphoserine. Residues 358–380 (NARLIRELQEEVARLRELLMAQG) adopt a coiled-coil conformation. Positions 397–434 (GGVLPAASSPPAPASPSSPPPHNGELEPSFSPSAEPQI) are disordered. Residues 404–418 (SSPPAPASPSSPPPH) are compositionally biased toward pro residues. A coiled-coil region spans residues 437–478 (EEAMERLQETEKIIAELNETWEEKLRKTEALRMEREALLAEM). A Phosphoserine modification is found at Ser-491. In terms of domain architecture, FHA spans 520-587 (TRVGQVDVDI…LKSGNRIVMG (68 aa)). Residues 630-671 (EQQGIDIKLEMEKRLQDLENQYRKEKEEADLLLEQQRLYADS) adopt a coiled-coil conformation. Ser-671 and Ser-673 each carry phosphoserine. A coiled-coil region spans residues 824–868 (AEVEDLRAHIDKLTGILQEVKLQNSSKDRELQALRDRMLRMERVI). 2 disordered regions span residues 897–921 (EAVS…ERVS) and 946–1097 (QGLQ…GAAV). Ser-911 carries the post-translational modification Phosphoserine. Residues 949–958 (QGSGGRGGGL) are compositionally biased toward gly residues. The segment covering 997–1015 (GPQPPEEVTAPPPPPNRRP) has biased composition (pro residues). Positions 1016 to 1026 (PSPRRPHRPRR) are enriched in basic residues. Ser-1028 carries the phosphoserine modification. Arg-1036 carries the omega-N-methylarginine modification. Residues 1059–1077 (QPQPYPAQRPGPRYPPYTT) show a composition bias toward pro residues. A Phosphothreonine modification is found at Thr-1077. Ser-1086 carries the phosphoserine modification. Positions 1086 to 1097 (SAPDLKESGAAV) are enriched in basic and acidic residues.

The protein belongs to the TRAFAC class myosin-kinesin ATPase superfamily. Kinesin family. Unc-104 subfamily.

The protein localises to the cytoplasm. It localises to the cytoskeleton. In terms of biological role, probable motor protein. The chain is Kinesin-like protein KIF1C (Kif1c) from Rattus norvegicus (Rat).